The primary structure comprises 126 residues: MSIGVPIKVLHEAEGHIVTCETNTGEVYRGKLIEAEDNMNCQMSNITVTYRDGRVAQLEQVYIRGSKIRFLILPDMLKNAPMLKSMKNKNQGSGAGRGKAAILKAQVAARGRGRGMGRGNIFQKRR.

S2 is modified (N-acetylserine). In terms of domain architecture, Sm spans 5-77; that stretch reads VPIKVLHEAE…IRFLILPDML (73 aa). 5 repeat units span residues 110-111, 112-113, 114-115, 116-117, and 118-119. A 5 X 2 AA tandem repeats of [RM]-G; required for interaction with SMN1 region spans residues 110-119; sequence RGRGRGMGRG.

It belongs to the snRNP core protein family. Core component of the spliceosomal U1, U2, U4 and U5 small nuclear ribonucleoproteins (snRNPs), the building blocks of the spliceosome. Most spliceosomal snRNPs contain a common set of Sm proteins, SNRPB, SNRPD1, SNRPD2, SNRPD3, SNRPE, SNRPF and SNRPG that assemble in a heptameric protein ring on the Sm site of the small nuclear RNA to form the core snRNP. Component of the U1 snRNP. The U1 snRNP is composed of the U1 snRNA and the 7 core Sm proteins SNRPB, SNRPD1, SNRPD2, SNRPD3, SNRPE, SNRPF and SNRPG, and at least three U1 snRNP-specific proteins SNRNP70/U1-70K, SNRPA/U1-A and SNRPC/U1-C. Component of the U4/U6-U5 tri-snRNP complex composed of the U4, U6 and U5 snRNAs and at least PRPF3, PRPF4, PRPF6, PRPF8, PRPF31, SNRNP200, TXNL4A, SNRNP40, SNRPB, SNRPD1, SNRPD2, SNRPD3, SNRPE, SNRPF, SNRPG, DDX23, CD2BP2, PPIH, SNU13, EFTUD2, SART1 and USP39, plus LSM2, LSM3, LSM4, LSM5, LSM6, LSM7 and LSM8. Component of the U7 snRNP complex, or U7 Sm protein core complex, that is composed of the U7 snRNA and at least LSM10, LSM11, SNRPB, SNRPD3, SNRPE, SNRPF and SNRPG; the complex does not contain SNRPD1 and SNRPD2. Component of the minor spliceosome, which splices U12-type introns. Part of the SMN-Sm complex that contains SMN1, GEMIN2/SIP1, DDX20/GEMIN3, GEMIN4, GEMIN5, GEMIN6, GEMIN7, GEMIN8, STRAP/UNRIP and the Sm proteins SNRPB, SNRPD1, SNRPD2, SNRPD3, SNRPE, SNRPF and SNRPG; catalyzes core snRNPs assembly. Forms a 6S pICln-Sm complex composed of CLNS1A/pICln, SNRPD1, SNRPD2, SNRPE, SNRPF and SNRPG; ring-like structure where CLNS1A/pICln mimics additional Sm proteins and which is unable to assemble into the core snRNP. Interacts (via C-terminus) with SMN1 (via Tudor domain); the interaction is direct. In terms of processing, methylated on arginine residues by PRMT5 and PRMT7; probable asymmetric dimethylation which is required for assembly and biogenesis of snRNPs.

The protein localises to the cytoplasm. The protein resides in the cytosol. It localises to the nucleus. Functionally, plays a role in pre-mRNA splicing as a core component of the spliceosomal U1, U2, U4 and U5 small nuclear ribonucleoproteins (snRNPs), the building blocks of the spliceosome. Component of both the pre-catalytic spliceosome B complex and activated spliceosome C complexes. As a component of the minor spliceosome, involved in the splicing of U12-type introns in pre-mRNAs. As part of the U7 snRNP it is involved in histone pre-mRNA 3'-end processing. This is Small nuclear ribonucleoprotein Sm D3 (SNRPD3) from Homo sapiens (Human).